The sequence spans 127 residues: Lymphocyte antigen 6D (127 aa).

A signal peptide spans 1 to 20 (MKTALLVLLVLAVATSPAWA). The UPAR/Ly6 domain occupies 21–108 (LRCHVCTNSA…AAPGHALLSS (88 aa)). Disulfide bonds link C23-C45, C26-C32, C38-C63, C67-C86, and C87-C92. Residue S98 is the site of GPI-anchor amidated serine attachment. Positions 99–127 (AAPGHALLSSVTLGLATSLSLLTVMALCL) are cleaved as a propeptide — removed in mature form.

In terms of tissue distribution, lymphoid cells lacking Ly6d, called ALP (all-lymphoid progenitor), retain full lymphoid potential and early thymic seeding activity, whereas cells containing Ly6d, called BLP (B-cell-biased lymphoid progenitor), up-regulate the B-cell specifying factors Ebf1 and Pax5 and behave essentially as B-cell progenitors (at protein level). Thymocytes and B-cells.

The protein localises to the cell membrane. May act as a specification marker at earliest stage specification of lymphocytes between B- and T-cell development. Marks the earliest stage of B-cell specification. The sequence is that of Lymphocyte antigen 6D (Ly6d) from Mus musculus (Mouse).